The following is a 1021-amino-acid chain: MKQRFSALDIAAIAAELREQVVGCRLNNFYDLNARTFLLKFGKQDAKYSIVIESGFRAHLTKFDRENAPLSGFVTKLRKHIKSRRLTGVSQLGTDRVLVFTFGGGANDQDPDWTYYLVCEFFAAGNVLLLDGHYKILSLLRVVTFDKDQVYAVGQKYNLDKNNLVNDNKSQSTIPHMTAERLNILLDEISTAYASPTSINEPLPDQQLSSSTKPIKVPKPVSLRKALTIRLGEYGNALIEHCLRRSKLDPLFPACQLCADETKKNDLLAAFQEADSILAAVNKPPVKGYIFSLEQALTNAADPQHPEECTTLYEDFHPFQPLQLVQANRKCMEFPTYNECVDEFFSSIEAQKLKKRAHDRLATAERRLESAKEDQARKLQSLQDAQATCALRAQAIEMNPELVEAIISYINSLLNQGMDWLDIEKLIQSQKRRSPVAAAIQIPLKLIKNAVTVFLPNPESVDNSDESSETSDDDLDDSDDDNKVKEGKVSSKFIAVELDLSLGAFANARKQYELRREALIKETKTAEAASKALKSTQRKIEQDLKRSTTADTQRILLGRKTFFFEKFHWFISSEGYLVLGGRDAQQNELLFQKYCNTGDIFVCADLPKSSIIIVKNKNPHDPIPPNTLQQAGSLALASSKAWDSKTVISAWWVRIDEVSKLAPTGEILPTGSFAIRAKKNYLPPTVLIMGYGILWQLDEKSSERRKARRLEMEVVETQGKVSELKMEGTSVTSEDNIQDVVSEVSYNEDTNNQSTPDTTGSDIHIVSEKRGKKGSKVITAKKVSAKERREARRARRQTALEESLKAPISIEDATDPQTILAILKQKKAKKKHAAREMEISSQIPSNDSSNVQTPTAESEIEEDGVSEPISAEVIEDQSRNSEAENEKGLSTEQRDEKKHAKVESFQRQEMPRSLFEEIFFAIDSLTPNPQQQDTVINAVPTFAPYNAMTKFNQKVKVMPGTGKVGKAARESIAYFMKKLPKSSKEAAYLENLKDGEIVAPISVSRLKMVFGSSGNTKKSKK.

Residues 348–388 (IEAQKLKKRAHDRLATAERRLESAKEDQARKLQSLQDAQAT) are a coiled coil. Residues 457–484 (NPESVDNSDESSETSDDDLDDSDDDNKV) are disordered. Over residues 462-480 (DNSDESSETSDDDLDDSDD) the composition is skewed to acidic residues. Phosphoserine is present on S478. Coiled-coil stretches lie at residues 507–546 (NARK…DLKR) and 698–727 (DEKS…LKME). 2 stretches are compositionally biased toward polar residues: residues 746 to 761 (YNED…TTGS) and 839 to 856 (ISSQ…TPTA). Disordered regions lie at residues 746–801 (YNED…TALE) and 832–905 (HAAR…VESF). Residues 876–905 (DQSRNSEAENEKGLSTEQRDEKKHAKVESF) are compositionally biased toward basic and acidic residues.

Belongs to the NEMF family. In terms of assembly, component of the ribosome quality control complex (RQC), composed of the E3 ubiquitin ligase rkr1/ltn1, rqc1 and mtr1/rqc2, as well as cdc48 and its ubiquitin-binding cofactors associated with the 60S ribosomal subunit. RQC2 binds to the 40S-binding surface of tRNAs.

The protein localises to the cytoplasm. Its function is as follows. Key component of the ribosome quality control complex (RQC), a ribosome-associated complex that mediates the extraction of incompletely synthesized nascent chains from stalled ribosomes as well as their ubiquitin-mediated proteasomal degradation. Thereby, frees 60S subunit ribosomes from the stalled translation complex and prevents the accumulation of nascent polypeptide chains that are potentially toxic for the cell. Within the RQC complex, mtr1/rqc2 specifically binds stalled 60S ribosomal subunits by recognizing an exposed, nascent chain-conjugated tRNA moiety and promotes the recruitment of rkr1/ltn1 to stalled 60S subunits. Following binding to stalled 60S ribosomal subunits, mtr1/rqc2 mediates CAT tailing by recruiting alanine- and threonine-charged tRNA to the A-site and directing the elongation of stalled nascent chains independently of mRNA or 40S subunits, leading to non-templated C-terminal Ala and Thr extensions (CAT tails). CAT tails promote the rkr1/ltn1-mediated ubiquitination of incompletely synthesized nascent polypeptides: CAT tailing facilitates rkr1/ltn1-dependent ubiquitination by exposing lysine residues that would otherwise remain buried in the ribosomal exit tunnel. Following ubiquitination, incompletely synthesized nascent polypeptides are recognized by CDC48 and degraded by the proteasome. CAT-tailed proteins tend to aggregate and sequester chaperones and can induce proteotoxic stress; their rkr1/ltn1-dependent ubiquitination and degradation is required to prevent proteotoxic stress. This Schizosaccharomyces pombe (strain 972 / ATCC 24843) (Fission yeast) protein is Ribosome quality control complex subunit 2.